Here is a 448-residue protein sequence, read N- to C-terminus: Bifunctional protein GlmU (448 aa).

Residues 1 to 230 (MRSCLSIVLA…FDNIVGINNC (230 aa)) are pyrophosphorylase. Residues 9–12 (LAAG), lysine 23, glutamine 76, and 81–82 (GT) contribute to the UDP-N-acetyl-alpha-D-glucosamine site. Aspartate 106 is a Mg(2+) binding site. Positions 142, 156, 171, and 228 each coordinate UDP-N-acetyl-alpha-D-glucosamine. Position 228 (asparagine 228) interacts with Mg(2+). The interval 231-251 (FELFEADSLWQKRKARDLMLS) is linker. The tract at residues 252–448 (GVTILKPETV…VRLSGNQQKK (197 aa)) is N-acetyltransferase. 2 residues coordinate UDP-N-acetyl-alpha-D-glucosamine: arginine 317 and lysine 335. The active-site Proton acceptor is the histidine 347. Residues tyrosine 350 and asparagine 361 each contribute to the UDP-N-acetyl-alpha-D-glucosamine site. Residues alanine 364, 370 to 371 (NY), serine 389, serine 407, and arginine 424 contribute to the acetyl-CoA site.

It in the N-terminal section; belongs to the N-acetylglucosamine-1-phosphate uridyltransferase family. The protein in the C-terminal section; belongs to the transferase hexapeptide repeat family. Homotrimer. Mg(2+) serves as cofactor.

It localises to the cytoplasm. The enzyme catalyses alpha-D-glucosamine 1-phosphate + acetyl-CoA = N-acetyl-alpha-D-glucosamine 1-phosphate + CoA + H(+). It catalyses the reaction N-acetyl-alpha-D-glucosamine 1-phosphate + UTP + H(+) = UDP-N-acetyl-alpha-D-glucosamine + diphosphate. The protein operates within nucleotide-sugar biosynthesis; UDP-N-acetyl-alpha-D-glucosamine biosynthesis; N-acetyl-alpha-D-glucosamine 1-phosphate from alpha-D-glucosamine 6-phosphate (route II): step 2/2. It functions in the pathway nucleotide-sugar biosynthesis; UDP-N-acetyl-alpha-D-glucosamine biosynthesis; UDP-N-acetyl-alpha-D-glucosamine from N-acetyl-alpha-D-glucosamine 1-phosphate: step 1/1. Its pathway is bacterial outer membrane biogenesis; LPS lipid A biosynthesis. Its function is as follows. Catalyzes the last two sequential reactions in the de novo biosynthetic pathway for UDP-N-acetylglucosamine (UDP-GlcNAc). The C-terminal domain catalyzes the transfer of acetyl group from acetyl coenzyme A to glucosamine-1-phosphate (GlcN-1-P) to produce N-acetylglucosamine-1-phosphate (GlcNAc-1-P), which is converted into UDP-GlcNAc by the transfer of uridine 5-monophosphate (from uridine 5-triphosphate), a reaction catalyzed by the N-terminal domain. This Bartonella quintana (strain Toulouse) (Rochalimaea quintana) protein is Bifunctional protein GlmU.